Consider the following 343-residue polypeptide: Cyclin-Y-like protein 1-B (343 aa).

A disordered region spans residues 1–69; that stretch reads MGNTVTCCVS…ECNPSDHPQA (69 aa). Residues 17–28 are compositionally biased toward basic and acidic residues; that stretch reads AGRDRRVAERGE. Residues 145–267 enclose the Cyclin N-terminal domain; it reads DIFDEKLHPL…FLELLQFNIN (123 aa).

Belongs to the cyclin family. Cyclin Y subfamily.

The polypeptide is Cyclin-Y-like protein 1-B (ccnyl1-b) (Xenopus laevis (African clawed frog)).